Here is a 514-residue protein sequence, read N- to C-terminus: Cholesterol side-chain cleavage enzyme, mitochondrial (514 aa).

Residues 1–39 (MMVSWSVCRSSLALPACGLPSARHNSSMPVVRQALSPDN) constitute a mitochondrion transit peptide. Cysteine 458 is a binding site for heme.

It belongs to the cytochrome P450 family. Heme serves as cofactor. In terms of tissue distribution, in the ovary, not found in early vitellogenic follicles, barely detected in postvitellogenic follicles and abundant in post-ovulatory follicles.

It localises to the mitochondrion inner membrane. It catalyses the reaction 6 reduced [adrenodoxin] + cholesterol + 3 O2 + 6 H(+) = 4-methylpentanal + pregnenolone + 6 oxidized [adrenodoxin] + 4 H2O. The protein operates within lipid metabolism; C21-steroid hormone metabolism. Catalyzes the side-chain cleavage reaction of cholesterol to pregnenolone, the precursor of most steroid hormones. The protein is Cholesterol side-chain cleavage enzyme, mitochondrial (cyp11a1) of Oncorhynchus mykiss (Rainbow trout).